The primary structure comprises 213 residues: 2,3-bisphosphoglycerate-dependent phosphoglycerate mutase (213 aa).

Substrate-binding positions include 8-15 (RHGQSEWN), 21-22 (TG), Arg58, 84-87 (ERNY), Lys95, 111-112 (RR), and 155-156 (GN). His9 (tele-phosphohistidine intermediate) is an active-site residue. Glu84 functions as the Proton donor/acceptor in the catalytic mechanism.

This sequence belongs to the phosphoglycerate mutase family. BPG-dependent PGAM subfamily.

The enzyme catalyses (2R)-2-phosphoglycerate = (2R)-3-phosphoglycerate. It participates in carbohydrate degradation; glycolysis; pyruvate from D-glyceraldehyde 3-phosphate: step 3/5. In terms of biological role, catalyzes the interconversion of 2-phosphoglycerate and 3-phosphoglycerate. The protein is 2,3-bisphosphoglycerate-dependent phosphoglycerate mutase of Cytophaga hutchinsonii (strain ATCC 33406 / DSM 1761 / CIP 103989 / NBRC 15051 / NCIMB 9469 / D465).